A 241-amino-acid polypeptide reads, in one-letter code: 3-deoxy-D-manno-octulosonic acid kinase (241 aa).

Asp-171 is a catalytic residue.

Belongs to the protein kinase superfamily. KdkA/RfaP family.

It localises to the cell inner membrane. It catalyses the reaction an alpha-Kdo-(2-&gt;6)-lipid IVA + ATP = a 4-O-phospho-alpha-Kdo-(2-&gt;6)-lipid IVA + ADP + H(+). Its pathway is bacterial outer membrane biogenesis; LPS core biosynthesis. Catalyzes the ATP-dependent phosphorylation of the 3-deoxy-D-manno-octulosonic acid (Kdo) residue in Kdo-lipid IV(A) at the 4-OH position. The sequence is that of 3-deoxy-D-manno-octulosonic acid kinase from Haemophilus influenzae (strain PittGG).